A 560-amino-acid polypeptide reads, in one-letter code: Dihydroxy-acid dehydratase (560 aa).

The segment at 1 to 20 (MGDNLKKRSSMTTDGDNRAP) is disordered. Cys52 serves as a coordination point for [2Fe-2S] cluster. Asp84 contacts Mg(2+). Cys125 is a [2Fe-2S] cluster binding site. Mg(2+) is bound by residues Asp126 and Lys127. N6-carboxylysine is present on Lys127. Residue Cys197 coordinates [2Fe-2S] cluster. Glu448 contacts Mg(2+). The active-site Proton acceptor is the Ser474.

It belongs to the IlvD/Edd family. As to quaternary structure, homodimer. [2Fe-2S] cluster is required as a cofactor. It depends on Mg(2+) as a cofactor.

The enzyme catalyses (2R)-2,3-dihydroxy-3-methylbutanoate = 3-methyl-2-oxobutanoate + H2O. It carries out the reaction (2R,3R)-2,3-dihydroxy-3-methylpentanoate = (S)-3-methyl-2-oxopentanoate + H2O. Its pathway is amino-acid biosynthesis; L-isoleucine biosynthesis; L-isoleucine from 2-oxobutanoate: step 3/4. It functions in the pathway amino-acid biosynthesis; L-valine biosynthesis; L-valine from pyruvate: step 3/4. Functions in the biosynthesis of branched-chain amino acids. Catalyzes the dehydration of (2R,3R)-2,3-dihydroxy-3-methylpentanoate (2,3-dihydroxy-3-methylvalerate) into 2-oxo-3-methylpentanoate (2-oxo-3-methylvalerate) and of (2R)-2,3-dihydroxy-3-methylbutanoate (2,3-dihydroxyisovalerate) into 2-oxo-3-methylbutanoate (2-oxoisovalerate), the penultimate precursor to L-isoleucine and L-valine, respectively. The protein is Dihydroxy-acid dehydratase of Leptospira interrogans serogroup Icterohaemorrhagiae serovar copenhageni (strain Fiocruz L1-130).